The following is a 212-amino-acid chain: FMN-dependent NADH:quinone oxidoreductase (212 aa).

FMN-binding positions include Ser9, 15 to 17 (SVS), and 138 to 141 (TRGG).

The protein belongs to the azoreductase type 1 family. In terms of assembly, homodimer. FMN is required as a cofactor.

It catalyses the reaction 2 a quinone + NADH + H(+) = 2 a 1,4-benzosemiquinone + NAD(+). The catalysed reaction is N,N-dimethyl-1,4-phenylenediamine + anthranilate + 2 NAD(+) = 2-(4-dimethylaminophenyl)diazenylbenzoate + 2 NADH + 2 H(+). Its function is as follows. Quinone reductase that provides resistance to thiol-specific stress caused by electrophilic quinones. Also exhibits azoreductase activity. Catalyzes the reductive cleavage of the azo bond in aromatic azo compounds to the corresponding amines. In Delftia acidovorans (strain DSM 14801 / SPH-1), this protein is FMN-dependent NADH:quinone oxidoreductase.